Reading from the N-terminus, the 487-residue chain is Protein nucleotidyltransferase YdiU (487 aa).

8 residues coordinate ATP: G90, G92, R93, K113, D125, G126, R176, and R183. D252 functions as the Proton acceptor in the catalytic mechanism. 2 residues coordinate Mg(2+): N253 and D262. ATP is bound at residue D262.

The protein belongs to the SELO family. Mg(2+) is required as a cofactor. Mn(2+) serves as cofactor.

It catalyses the reaction L-seryl-[protein] + ATP = 3-O-(5'-adenylyl)-L-seryl-[protein] + diphosphate. The catalysed reaction is L-threonyl-[protein] + ATP = 3-O-(5'-adenylyl)-L-threonyl-[protein] + diphosphate. It carries out the reaction L-tyrosyl-[protein] + ATP = O-(5'-adenylyl)-L-tyrosyl-[protein] + diphosphate. The enzyme catalyses L-histidyl-[protein] + UTP = N(tele)-(5'-uridylyl)-L-histidyl-[protein] + diphosphate. It catalyses the reaction L-seryl-[protein] + UTP = O-(5'-uridylyl)-L-seryl-[protein] + diphosphate. The catalysed reaction is L-tyrosyl-[protein] + UTP = O-(5'-uridylyl)-L-tyrosyl-[protein] + diphosphate. Functionally, nucleotidyltransferase involved in the post-translational modification of proteins. It can catalyze the addition of adenosine monophosphate (AMP) or uridine monophosphate (UMP) to a protein, resulting in modifications known as AMPylation and UMPylation. This Pseudomonas fluorescens (strain Pf0-1) protein is Protein nucleotidyltransferase YdiU.